The sequence spans 946 residues: 4-alpha-glucanotransferase DPE2 (946 aa).

CBM20 domains lie at 7-115 (KKSL…DWWQ) and 150-264 (SLEP…PWRG). The interval 919 to 946 (SGRSFPGKVDGAEESGEKLAKVQLNGKP) is disordered.

The protein belongs to the disproportionating enzyme family.

It localises to the cytoplasm. The protein resides in the cytosol. It carries out the reaction Transfers a segment of a (1-&gt;4)-alpha-D-glucan to a new position in an acceptor, which may be glucose or a (1-&gt;4)-alpha-D-glucan.. In terms of biological role, cytosolic alpha-glucanotransferase essential for the cytosolic metabolism of maltose, an intermediate on the pathway by which starch is converted to sucrose in leaves at night. The chain is 4-alpha-glucanotransferase DPE2 (DPE2) from Oryza sativa subsp. japonica (Rice).